We begin with the raw amino-acid sequence, 276 residues long: Secretagogin (276 aa).

6 EF-hand domains span residues 12 to 47 (LDAAGFWQIWQRFDADEKGYIEEKELDAFFHHVLTK), 58 to 93 (NVWKMKQQFMAAHDVSKDGHIQMKELACLFLSEDEN), 105 to 140 (DSSVEFMQIWRKYDADSSGFISAAELCNFLRDLFLH), 149 to 184 (KLEEYTGTMMKIFDKNKDGRLDLNDLARILALQENF), 197 to 232 (ERKRDFEKIFAHYDVSKTGALEGPEVDGFVKDMMEL), and 240 to 276 (VDLDKFREILLRHCDVNKDGKIQKSELALCLGLKINP). Residues D71, S73, D75, H77, E82, D118, D120, S122, E129, D162, N164, D166, R168, D173, D210, S212, T214, E221, D254, N256, D258, K260, and E265 each coordinate Ca(2+).

It localises to the cytoplasm. The protein localises to the secreted. The protein resides in the cytoplasmic vesicle. Its subcellular location is the secretory vesicle membrane. In Sus scrofa (Pig), this protein is Secretagogin (SCGN).